Reading from the N-terminus, the 141-residue chain is ATP synthase epsilon chain (141 aa).

The protein belongs to the ATPase epsilon chain family. F-type ATPases have 2 components, CF(1) - the catalytic core - and CF(0) - the membrane proton channel. CF(1) has five subunits: alpha(3), beta(3), gamma(1), delta(1), epsilon(1). CF(0) has three main subunits: a, b and c.

The protein localises to the cell membrane. Produces ATP from ADP in the presence of a proton gradient across the membrane. The sequence is that of ATP synthase epsilon chain from Natranaerobius thermophilus (strain ATCC BAA-1301 / DSM 18059 / JW/NM-WN-LF).